The following is a 244-amino-acid chain: Phosphoadenosine 5'-phosphosulfate reductase (244 aa).

C239 functions as the Nucleophile; cysteine thiosulfonate intermediate in the catalytic mechanism.

Belongs to the PAPS reductase family. CysH subfamily.

Its subcellular location is the cytoplasm. It catalyses the reaction [thioredoxin]-disulfide + sulfite + adenosine 3',5'-bisphosphate + 2 H(+) = [thioredoxin]-dithiol + 3'-phosphoadenylyl sulfate. It participates in sulfur metabolism; hydrogen sulfide biosynthesis; sulfite from sulfate: step 3/3. In terms of biological role, catalyzes the formation of sulfite from phosphoadenosine 5'-phosphosulfate (PAPS) using thioredoxin as an electron donor. The chain is Phosphoadenosine 5'-phosphosulfate reductase from Salmonella agona (strain SL483).